A 1255-amino-acid chain; its full sequence is MTPGTQSPFFLLLLLTVLTVVTGSGHASSTPGGEKETSATQRSSVPSSTEKNAVSMTSSVLSSHSPGSGSSTTQGQDVTLAPATEPASGSAATWGQDVTSVPVTRPALGSTTPPAHDVTSAPDNKPAPGSTAPPAHGVTSAPDTRPAPGSTAPPAHGVTSAPDTRPAPGSTAPPAHGVTSAPDTRPAPGSTAPPAHGVTSAPDTRPAPGSTAPPAHGVTSAPDTRPAPGSTAPPAHGVTSAPDTRPAPGSTAPPAHGVTSAPDTRPAPGSTAPPAHGVTSAPDTRPAPGSTAPPAHGVTSAPDTRPAPGSTAPPAHGVTSAPDTRPAPGSTAPPAHGVTSAPDTRPAPGSTAPPAHGVTSAPDTRPAPGSTAPPAHGVTSAPDTRPAPGSTAPPAHGVTSAPDTRPAPGSTAPPAHGVTSAPDTRPAPGSTAPPAHGVTSAPDTRPAPGSTAPPAHGVTSAPDTRPAPGSTAPPAHGVTSAPDTRPAPGSTAPPAHGVTSAPDTRPAPGSTAPPAHGVTSAPDTRPAPGSTAPPAHGVTSAPDTRPAPGSTAPPAHGVTSAPDTRPAPGSTAPPAHGVTSAPDTRPAPGSTAPPAHGVTSAPDTRPAPGSTAPPAHGVTSAPDTRPAPGSTAPPAHGVTSAPDTRPAPGSTAPPAHGVTSAPDTRPAPGSTAPPAHGVTSAPDTRPAPGSTAPPAHGVTSAPDTRPAPGSTAPPAHGVTSAPDTRPAPGSTAPPAHGVTSAPDTRPAPGSTAPPAHGVTSAPDTRPAPGSTAPPAHGVTSAPDTRPAPGSTAPPAHGVTSAPDTRPAPGSTAPPAHGVTSAPDTRPAPGSTAPPAHGVTSAPDTRPAPGSTAPPAHGVTSAPDTRPAPGSTAPPAHGVTSAPDTRPAPGSTAPPAHGVTSAPDTRPAPGSTAPPAHGVTSAPDTRPAPGSTAPPAHGVTSAPDNRPALGSTAPPVHNVTSASGSASGSASTLVHNGTSARATTTPASKSTPFSIPSHHSDTPTTLASHSTKTDASSTHHSSVPPLTSSNHSTSPQLSTGVSFFFLSFHISNLQFNSSLEDPSTDYYQELQRDISEMFLQIYKQGGFLGLSNIKFRPGSVVVQLTLAFREGTINVHDVETQFNQYKTEAASRYNLTISDVSVSDVPFPFSAQSGAGVPGWGIALLVLVCVLVALAIVYLIALAVCQCRRKNYGQLDIFPARDTYHPMSEYPTYHTHGRYVPPSSTDRSPYEKVSAGNGGSSLSYTNPAVAATSANL.

Residues 1 to 23 (MTPGTQSPFFLLLLLTVLTVVTG) form the signal peptide. Positions 23-1033 (GSGHASSTPG…PLTSSNHSTS (1011 aa)) are disordered. The Extracellular segment spans residues 24–1158 (SGHASSTPGG…SAQSGAGVPG (1135 aa)). Residues 38–54 (SATQRSSVPSSTEKNAV) show a composition bias toward polar residues. Over residues 55–75 (SMTSSVLSSHSPGSGSSTTQG) the composition is skewed to low complexity. Residues 61–80 (LSSHSPGSGSSTTQGQDVTL) form a 1; approximate repeat. A 2; approximate repeat occupies 81–100 (APATEPASGSAATWGQDVTS). Over residues 90-102 (SAATWGQDVTSVP) the composition is skewed to polar residues. Tandem repeats lie at residues 101–120 (VPVTRPALGSTTPPAHDVTS), 121–140 (APDNKPAPGSTAPPAHGVTS), 141–160 (APDTRPAPGSTAPPAHGVTS), 161–180 (APDTRPAPGSTAPPAHGVTS), 181–200 (APDTRPAPGSTAPPAHGVTS), 201–220 (APDTRPAPGSTAPPAHGVTS), 221–240 (APDTRPAPGSTAPPAHGVTS), 241–260 (APDTRPAPGSTAPPAHGVTS), 261–280 (APDTRPAPGSTAPPAHGVTS), 281–300 (APDTRPAPGSTAPPAHGVTS), 301–320 (APDTRPAPGSTAPPAHGVTS), 321–340 (APDTRPAPGSTAPPAHGVTS), 341–360 (APDTRPAPGSTAPPAHGVTS), 361–380 (APDTRPAPGSTAPPAHGVTS), 381–400 (APDTRPAPGSTAPPAHGVTS), 401–420 (APDTRPAPGSTAPPAHGVTS), 421–440 (APDTRPAPGSTAPPAHGVTS), 441–460 (APDTRPAPGSTAPPAHGVTS), 461–480 (APDTRPAPGSTAPPAHGVTS), 481–500 (APDTRPAPGSTAPPAHGVTS), 501–520 (APDTRPAPGSTAPPAHGVTS), 521–540 (APDTRPAPGSTAPPAHGVTS), 541–560 (APDTRPAPGSTAPPAHGVTS), 561–580 (APDTRPAPGSTAPPAHGVTS), 581–600 (APDTRPAPGSTAPPAHGVTS), 601–620 (APDTRPAPGSTAPPAHGVTS), 621–640 (APDTRPAPGSTAPPAHGVTS), 641–660 (APDTRPAPGSTAPPAHGVTS), 661–680 (APDTRPAPGSTAPPAHGVTS), 681–700 (APDTRPAPGSTAPPAHGVTS), 701–720 (APDTRPAPGSTAPPAHGVTS), 721–740 (APDTRPAPGSTAPPAHGVTS), 741–760 (APDTRPAPGSTAPPAHGVTS), 761–780 (APDTRPAPGSTAPPAHGVTS), 781–800 (APDTRPAPGSTAPPAHGVTS), 801–820 (APDTRPAPGSTAPPAHGVTS), 821–840 (APDTRPAPGSTAPPAHGVTS), 841–860 (APDTRPAPGSTAPPAHGVTS), 861–880 (APDTRPAPGSTAPPAHGVTS), 881–900 (APDTRPAPGSTAPPAHGVTS), 901–920 (APDTRPAPGSTAPPAHGVTS), 921–940 (APDTRPAPGSTAPPAHGVTS), and 941–960 (APDNRPALGSTAPPVHNVTS). The segment at 126–965 (PAPGSTAPPA…HNVTSASGSA (840 aa)) is 42 X 20 AA approximate tandem repeats of P-A-P-G-S-T-A-P-P-A-H-G-V-T-S-A-P-D-T-R. Residues Thr-131 and Thr-139 are each glycosylated (O-linked (GalNAc...) threonine). Ser-140 is a glycosylation site (O-linked (GalNAc...) serine). The O-linked (GalNAc...) threonine glycan is linked to Thr-144. Asn-957 is a glycosylation site (N-linked (GlcNAc...) asparagine). Residues 960-970 (SASGSASGSAS) are compositionally biased toward low complexity. The 46; approximate repeat unit spans residues 961–980 (ASGSASGSASTLVHNGTSAR). Polar residues-rich tracts occupy residues 971–993 (TLVHNGTSARATTTPASKSTPFS) and 1001–1033 (TPTTLASHSTKTDASSTHHSSVPPLTSSNHSTS). An N-linked (GlcNAc...) asparagine glycan is attached at Asn-975. The stretch at 981–1000 (ATTTPASKSTPFSIPSHHSD) is one 47; approximate repeat. Residues 1001-1020 (TPTTLASHSTKTDASSTHHS) form a 48; approximate repeat. Residues Asn-1029, Asn-1055, and Asn-1133 are each glycosylated (N-linked (GlcNAc...) asparagine). The SEA domain maps to 1039 to 1148 (GVSFFFLSFH…VSVSDVPFPF (110 aa)). Residues 1159-1181 (WGIALLVLVCVLVALAIVYLIAL) form a helical membrane-spanning segment. Topologically, residues 1182–1255 (AVCQCRRKNY…PAVAATSANL (74 aa)) are cytoplasmic. Residues Cys-1184 and Cys-1186 are each lipidated (S-palmitoyl cysteine). Positions 1192–1228 (GQLDIFPARDTYHPMSEYPTYHTHGRYVPPSSTDRSP) are interaction with P53. Tyr-1203 carries the phosphotyrosine; by PDGFR modification. The Interaction with GRB2 motif lies at 1203–1206 (YHPM). Tyr-1212 carries the phosphotyrosine modification. Residues 1214–1237 (THGRYVPPSSTDRSPYEKVSAGNG) are disordered. Phosphotyrosine; by PDGFR is present on Tyr-1218. The interval 1223-1230 (STDRSPYE) is required for interaction with GSK3B. Thr-1224 bears the Phosphothreonine; by PKC/PRKCD mark. A Phosphoserine; by GSK3-beta modification is found at Ser-1227. The residue at position 1229 (Tyr-1229) is a Phosphotyrosine; by CSK, EGFR and SRC. Residues 1229–1232 (YEKV) carry the Interaction with SRC and ESR1 motif. Positions 1233–1241 (SAGNGGSSL) are required for interaction with beta- and gamma-catenins. At Tyr-1243 the chain carries Phosphotyrosine. Residues 1243–1246 (YTNP) carry the Required for interaction with AP1S2 motif.

As to quaternary structure, the alpha subunit forms a tight, non-covalent heterodimeric complex with the proteolytically-released beta-subunit. Interaction, via the tandem repeat region, with domain 1 of ICAM1 is implicated in cell migration and metastases. Isoform 1 binds directly the SH2 domain of GRB2, and forms a MUC1/GRB2/SOS1 complex involved in RAS signaling. The cytoplasmic tail (MUC1CT) interacts with several proteins such as SRC, CTNNB1 and ERBs. Interaction with the SH2 domain of CSK decreases interaction with GSK3B. Interacts with CTNNB1/beta-catenin and JUP/gamma-catenin and promotes cell adhesion. Interaction with JUP/gamma-catenin is induced by heregulin. Binds PRKCD, ERBB2, ERBB3 and ERBB4. Heregulin (HRG) stimulates the interaction with ERBB2 and, to a much lesser extent, the interaction with ERBB3 and ERBB4. Interacts with P53 in response to DNA damage. Interacts with KLF4. Interacts with estrogen receptor alpha/ESR1, through its DNA-binding domain, and stimulates its transcription activity. Binds ADAM17. Isoform ZD forms disulfide-linked oligomers. Highly glycosylated (N- and O-linked carbohydrates and sialic acid). O-glycosylated to a varying degree on serine and threonine residues within each tandem repeat, ranging from mono- to penta-glycosylation. The average density ranges from about 50% in human milk to over 90% in T47D breast cancer cells. Further sialylation occurs during recycling. Membrane-shed glycoproteins from kidney and breast cancer cells have preferentially sialyated core 1 structures, while secreted forms from the same tissues display mainly core 2 structures. The O-glycosylated content is overlapping in both these tissues with terminal fucose and galactose, 2- and 3-linked galactose, 3- and 3,6-linked GalNAc-ol and 4-linked GlcNAc predominating. Differentially O-glycosylated in breast carcinomas with 3,4-linked GlcNAc. N-glycosylation consists of high-mannose, acidic complex-type and hybrid glycans in the secreted form MUC1/SEC, and neutral complex-type in the transmembrane form, MUC1/TM. Post-translationally, proteolytic cleavage in the SEA domain occurs in the endoplasmic reticulum by an autoproteolytic mechanism and requires the full-length SEA domain as well as requiring a Ser, Thr or Cys residue at the P + 1 site. Cleavage at this site also occurs on isoform MUC1/X but not on isoform MUC1/Y. Ectodomain shedding is mediated by ADAM17. In terms of processing, dual palmitoylation on cysteine residues in the CQC motif is required for recycling from endosomes back to the plasma membrane. Phosphorylated on tyrosines and serine residues in the C-terminal. Phosphorylation on tyrosines in the C-terminal increases the nuclear location of MUC1 and beta-catenin. Phosphorylation by PKC delta induces binding of MUC1 to beta-catenin/CTNNB1 and thus decreases the formation of the beta-catenin/E-cadherin complex. Src-mediated phosphorylation inhibits interaction with GSK3B. Src- and EGFR-mediated phosphorylation on Tyr-1229 increases binding to beta-catenin/CTNNB1. GSK3B-mediated phosphorylation on Ser-1227 decreases this interaction but restores the formation of the beta-cadherin/E-cadherin complex. On T-cell receptor activation, phosphorylated by LCK. PDGFR-mediated phosphorylation increases nuclear colocalization of MUC1CT and CTNNB1. Post-translationally, the N-terminal sequence has been shown to begin at position 24 or 28. In terms of tissue distribution, expressed on the apical surface of epithelial cells, especially of airway passages, breast and uterus. Also expressed in activated and unactivated T-cells. Overexpressed in epithelial tumors, such as breast or ovarian cancer and also in non-epithelial tumor cells. Isoform Y is expressed in tumor cells only.

The protein localises to the apical cell membrane. It is found in the secreted. Its subcellular location is the cell membrane. The protein resides in the cytoplasm. It localises to the nucleus. The alpha subunit has cell adhesive properties. Can act both as an adhesion and an anti-adhesion protein. May provide a protective layer on epithelial cells against bacterial and enzyme attack. Functionally, the beta subunit contains a C-terminal domain which is involved in cell signaling, through phosphorylations and protein-protein interactions. Modulates signaling in ERK, SRC and NF-kappa-B pathways. In activated T-cells, influences directly or indirectly the Ras/MAPK pathway. Promotes tumor progression. Regulates TP53-mediated transcription and determines cell fate in the genotoxic stress response. Binds, together with KLF4, the PE21 promoter element of TP53 and represses TP53 activity. This Homo sapiens (Human) protein is Mucin-1 (MUC1).